The following is a 362-amino-acid chain: Serine/threonine-protein phosphatase 2A activator 1 (362 aa).

Positions 1–10 (MQPHTQPPQP) are enriched in pro residues. Disordered stretches follow at residues 1–28 (MQPHTQPPQPEASSSRAVHIPSDPAPPR) and 339–362 (NVEERGDKNEGKGTDAGTKAPWAR). The segment covering 340-351 (VEERGDKNEGKG) has biased composition (basic and acidic residues).

Belongs to the PTPA-type PPIase family.

Its subcellular location is the cytoplasm. The protein localises to the nucleus. The catalysed reaction is [protein]-peptidylproline (omega=180) = [protein]-peptidylproline (omega=0). Its function is as follows. PPIases accelerate the folding of proteins. It catalyzes the cis-trans isomerization of proline imidic peptide bonds in oligopeptides. Acts as a regulatory subunit for PP2A-like phosphatases modulating their activity or substrate specificity, probably by inducing a conformational change in the catalytic subunit, a direct target of the PPIase. Can reactivate inactive phosphatase PP2A-phosphatase methylesterase complexes (PP2Ai) in presence of ATP and Mg(2+) by dissociating the inactive form from the complex. The protein is Serine/threonine-protein phosphatase 2A activator 1 (RRD1) of Cryptococcus neoformans var. neoformans serotype D (strain B-3501A) (Filobasidiella neoformans).